The sequence spans 362 residues: 3-isopropylmalate dehydrogenase (362 aa).

77–88 (GPKWGTGAVRPE) contacts NAD(+). Arg-95, Arg-105, Arg-134, and Asp-223 together coordinate substrate. Positions 223, 248, and 252 each coordinate Mg(2+). 287-298 (GSAPDLPANKVN) is a binding site for NAD(+).

Belongs to the isocitrate and isopropylmalate dehydrogenases family. Homodimer. The cofactor is Mg(2+). Mn(2+) is required as a cofactor.

It is found in the cytoplasm. It catalyses the reaction (2R,3S)-3-isopropylmalate + NAD(+) = 4-methyl-2-oxopentanoate + CO2 + NADH. Its pathway is amino-acid biosynthesis; L-leucine biosynthesis; L-leucine from 3-methyl-2-oxobutanoate: step 3/4. In terms of biological role, catalyzes the oxidation of 3-carboxy-2-hydroxy-4-methylpentanoate (3-isopropylmalate) to 3-carboxy-4-methyl-2-oxopentanoate. The product decarboxylates to 4-methyl-2 oxopentanoate. The chain is 3-isopropylmalate dehydrogenase (LEU2) from Kluyveromyces lactis (strain ATCC 8585 / CBS 2359 / DSM 70799 / NBRC 1267 / NRRL Y-1140 / WM37) (Yeast).